A 248-amino-acid polypeptide reads, in one-letter code: 3-deoxy-manno-octulosonate cytidylyltransferase (248 aa).

Belongs to the KdsB family.

It localises to the cytoplasm. The enzyme catalyses 3-deoxy-alpha-D-manno-oct-2-ulosonate + CTP = CMP-3-deoxy-beta-D-manno-octulosonate + diphosphate. It participates in nucleotide-sugar biosynthesis; CMP-3-deoxy-D-manno-octulosonate biosynthesis; CMP-3-deoxy-D-manno-octulosonate from 3-deoxy-D-manno-octulosonate and CTP: step 1/1. It functions in the pathway bacterial outer membrane biogenesis; lipopolysaccharide biosynthesis. Functionally, activates KDO (a required 8-carbon sugar) for incorporation into bacterial lipopolysaccharide in Gram-negative bacteria. The chain is 3-deoxy-manno-octulosonate cytidylyltransferase from Klebsiella pneumoniae subsp. pneumoniae (strain ATCC 700721 / MGH 78578).